A 443-amino-acid polypeptide reads, in one-letter code: Transcription factor E2F2 (443 aa).

The segment at 1-22 (MLRAPRTLAPATAQPTKSLPAL) is disordered. Residues 67–107 (ATPHGPEGQIVRCAPAGRLPAKRKLDLEGIGRPTVPEFRTP) are cyclin A/CDK2 binding. The DNA-binding element occupies 109 to 198 (GKCIRVDGLP…KNNIQWVGRE (90 aa)). Positions 157–178 (LNWAAEVLDVQKRRIYDITNVL) are leucine-zipper. Residues 162-198 (EVLDVQKRRIYDITNVLEGIQLIRKKSKNNIQWVGRE) carry the DEF box motif. A dimerization region spans residues 199-291 (LFEDPTRPSR…PDRAEENLQI (93 aa)). Positions 306–341 (PEEGQEPDSPAKEALPSTSALSPIPDCAQPGCSTDS) are disordered. Positions 361-443 (PPPPLPPAPS…SYDLGDLLIN (83 aa)) are transactivation. The interval 416-433 (DEYLWGMDEGEGISDLFD) is retinoblastoma protein binding.

This sequence belongs to the E2F/DP family. Component of the DRTF1/E2F transcription factor complex. Forms heterodimers with DP family members. The E2F2 complex binds specifically hypophosphorylated retinoblastoma protein RB1. During the cell cycle, RB1 becomes phosphorylated in mid-to-late G1 phase, detaches from the DRTF1/E2F complex, rendering E2F transcriptionally active. Viral oncoproteins, notably E1A, T-antigen and HPV E7, are capable of sequestering RB protein, thus releasing the active complex. Binds EAPP. Post-translationally, phosphorylated by CDK2 and cyclin A-CDK2 in the S-phase.

It localises to the nucleus. Transcription activator that binds DNA cooperatively with DP proteins through the E2 recognition site, 5'-TTTC[CG]CGC-3' found in the promoter region of a number of genes whose products are involved in cell cycle regulation or in DNA replication. The DRTF1/E2F complex functions in the control of cell-cycle progression from g1 to s phase. E2F2 binds specifically to RB1 in a cell-cycle dependent manner. The polypeptide is Transcription factor E2F2 (E2f2) (Mus musculus (Mouse)).